Reading from the N-terminus, the 228-residue chain is Ribosomal RNA large subunit methyltransferase E (228 aa).

The S-adenosyl-L-methionine site is built by G76, W78, D99, D115, and D139. Catalysis depends on K179, which acts as the Proton acceptor.

This sequence belongs to the class I-like SAM-binding methyltransferase superfamily. RNA methyltransferase RlmE family.

The protein resides in the cytoplasm. It catalyses the reaction uridine(2552) in 23S rRNA + S-adenosyl-L-methionine = 2'-O-methyluridine(2552) in 23S rRNA + S-adenosyl-L-homocysteine + H(+). In terms of biological role, specifically methylates the uridine in position 2552 of 23S rRNA at the 2'-O position of the ribose in the fully assembled 50S ribosomal subunit. In Bradyrhizobium diazoefficiens (strain JCM 10833 / BCRC 13528 / IAM 13628 / NBRC 14792 / USDA 110), this protein is Ribosomal RNA large subunit methyltransferase E.